The following is a 209-amino-acid chain: MNANTVLPPGLLLVLSAPSGAGKTTLAHRLLKETPDAVFSISVTTRRPRGKEREGVDYNFVDVATFQSKIERGEFVEWAEVYGHFYGSPQSVVDEARARKSAAIFDIDVQGGQAIKRKHPDAVTIFVLPPSMEELERRLRDRQTDSDETIRRRMLAARSEIERGIASYDYVVVNDDFERAFSDLRSVVVAERCRRERVDVSKLGLGIGG.

Residues 10–189 (GLLLVLSAPS…AFSDLRSVVV (180 aa)) enclose the Guanylate kinase-like domain. 17 to 24 (APSGAGKT) serves as a coordination point for ATP.

Belongs to the guanylate kinase family.

The protein localises to the cytoplasm. It carries out the reaction GMP + ATP = GDP + ADP. Its function is as follows. Essential for recycling GMP and indirectly, cGMP. The protein is Guanylate kinase of Myxococcus xanthus (strain DK1622).